A 397-amino-acid polypeptide reads, in one-letter code: Multidrug resistance protein MdtH (397 aa).

Transmembrane regions (helical) follow at residues tryptophan 11–isoleucine 31, phenylalanine 71–leucine 91, alanine 94–phenylalanine 114, leucine 137–leucine 157, tyrosine 163–leucine 183, leucine 211–isoleucine 231, alanine 242–alanine 262, phenylalanine 291–isoleucine 311, leucine 338–alanine 358, and leucine 366–phenylalanine 386.

The protein belongs to the major facilitator superfamily. DHA1 family. MdtH (TC 2.A.1.2.21) subfamily.

It is found in the cell inner membrane. This is Multidrug resistance protein MdtH from Aeromonas salmonicida (strain A449).